The following is a 189-amino-acid chain: uncharacterized protein (189 aa).

A signal peptide spans 1–23 (MIKTTPHKIVILMGILLSPSVFA). The segment at 104–125 (SSPKLIIPQSGDSSSTTSNIGM) is disordered. Residues 113 to 123 (SGDSSSTTSNI) are compositionally biased toward polar residues.

Belongs to the fimbrial protein family.

It is found in the fimbrium. Its function is as follows. Part of the yadCKLM-htrE-yadVN fimbrial operon. Could contribute to adhesion to various surfaces in specific environmental niches. This is an uncharacterized protein from Escherichia coli (strain K12).